Reading from the N-terminus, the 349-residue chain is Protein pelota homolog (349 aa).

This sequence belongs to the eukaryotic release factor 1 family. Pelota subfamily. As to quaternary structure, monomer. It depends on a divalent metal cation as a cofactor.

It localises to the cytoplasm. Its function is as follows. May function in recognizing stalled ribosomes, interact with stem-loop structures in stalled mRNA molecules, and effect endonucleolytic cleavage of the mRNA. May play a role in the release non-functional ribosomes and degradation of damaged mRNAs. Has endoribonuclease activity. This Nitrosopumilus maritimus (strain SCM1) protein is Protein pelota homolog.